A 71-amino-acid chain; its full sequence is Ceratotoxin-A (71 aa).

A signal peptide spans 1–23 (MANLKAVFLICIVAFIALQCVVA). 2 consecutive propeptides follow at residues 24–35 (EPAAEDSVVVKR) and 65–71 (VAAGLVG).

Homomer of four to six subunits.

The protein resides in the secreted. In terms of biological role, female-specific peptides with potent activity against Gram-positive and Gram-negative bacteria. They have as well hemolytic activity. The chain is Ceratotoxin-A (CTXA1) from Ceratitis capitata (Mediterranean fruit fly).